Consider the following 422-residue polypeptide: MVNCTSDYCVKDISLAPEGMKKIDWVSRFMPVLQHIRREFEEKKPFKGVRIAATLHLEMKTAFLLLTLKAGGAKVSAAASNPLSTQDDVVAALAKEGVKVYAIRGESKEEYYEFMNKALDIRPNIIIDDGADMVSLVHTERKELLDEIWGASEETTTGVIRLRAMERDKVLRFPVIAVNDSYMKYLFDNRYGTGQSTWDGIMRATNLLVAGKNVVVVGYGWCGRGIAMRARGLGATVIVVEVDPIKALEARMDGFLVMSMKEAAKIGDIFVTATGNIKCIRREHFELMKDGAIMANAGHFDVEIWKPDLEELAVEISNPRPNVTEYKLKDGRRLYLLADGRLVNLVAADGHPAEIMDMSFALQAKAAEYIKENHERLEPRVYVLPREIDEMVARIKLQSMGINIEELTEEQKKYLESWQHGT.

The substrate site is built by Asp-129 and Glu-154. Position 155–157 (155–157 (TTT)) interacts with NAD(+). Substrate contacts are provided by Lys-184 and Asp-188. Residues Asn-189, 218 to 223 (GYGWCG), Glu-241, Asn-276, 297 to 299 (AGH), and Asn-344 contribute to the NAD(+) site.

The protein belongs to the adenosylhomocysteinase family. NAD(+) serves as cofactor.

It localises to the cytoplasm. It carries out the reaction S-adenosyl-L-homocysteine + H2O = L-homocysteine + adenosine. It functions in the pathway amino-acid biosynthesis; L-homocysteine biosynthesis; L-homocysteine from S-adenosyl-L-homocysteine: step 1/1. In terms of biological role, may play a key role in the regulation of the intracellular concentration of adenosylhomocysteine. This chain is Adenosylhomocysteinase, found in Pyrococcus abyssi (strain GE5 / Orsay).